The primary structure comprises 197 residues: MFEYLNGKLVKISPTNIVIDVAGIGYLISVANPYAWSALMNTEVKIYVHQVIREDAHSLYGFVNEAEKALFLRLISVSGIGPKSALAIIAAADNEGLITAIDNSDIKYLTKFPGVGKKTAMQMVLDLAGKFDATGTVGISLLDAGPAGNLALEEAIEALQALGYKATELKKIEKKLAQETGLTSEEYIKSALKLMMK.

Positions 1–63 (MFEYLNGKLV…EDAHSLYGFV (63 aa)) are domain I. The segment at 64–142 (NEAEKALFLR…ATGTVGISLL (79 aa)) is domain II. Residues 142–146 (LDAGP) are flexible linker. A domain III region spans residues 147-197 (AGNLALEEAIEALQALGYKATELKKIEKKLAQETGLTSEEYIKSALKLMMK).

The protein belongs to the RuvA family. Homotetramer. Forms an RuvA(8)-RuvB(12)-Holliday junction (HJ) complex. HJ DNA is sandwiched between 2 RuvA tetramers; dsDNA enters through RuvA and exits via RuvB. An RuvB hexamer assembles on each DNA strand where it exits the tetramer. Each RuvB hexamer is contacted by two RuvA subunits (via domain III) on 2 adjacent RuvB subunits; this complex drives branch migration. In the full resolvosome a probable DNA-RuvA(4)-RuvB(12)-RuvC(2) complex forms which resolves the HJ.

It localises to the cytoplasm. The RuvA-RuvB-RuvC complex processes Holliday junction (HJ) DNA during genetic recombination and DNA repair, while the RuvA-RuvB complex plays an important role in the rescue of blocked DNA replication forks via replication fork reversal (RFR). RuvA specifically binds to HJ cruciform DNA, conferring on it an open structure. The RuvB hexamer acts as an ATP-dependent pump, pulling dsDNA into and through the RuvAB complex. HJ branch migration allows RuvC to scan DNA until it finds its consensus sequence, where it cleaves and resolves the cruciform DNA. The protein is Holliday junction branch migration complex subunit RuvA of Lactococcus lactis subsp. lactis (strain IL1403) (Streptococcus lactis).